A 344-amino-acid chain; its full sequence is METAKPIAPQKDSKANGVDATDPVVKVASPQDPAGDAKVEDATAPVAEVEPRTPRNRRLPTPENVRHAFESGKYPYSRKMSRRPYEAEKAMLQAELLKVQLWAQETGERFVLLFEGRDAAGKGGTIKRFMEHLNPRQARVVALNKPTWEEKGQWYYQRYVQELPTVGEMVFYDRSWYNRAGVERVMGFCTPNEYLEFMRQTPDLERMLVRSGIRLYKYWFSVTQEEQQRRFKSRETDPLKQWKLSPIDKASLDKWDDYTEAKEAMFFYTDTADAPWTIIKSNDKKRARLNCMRHFLSTIDYPGKDKHVVGEPDPLIVGRAHHVIQKSEHILGTALHPDQRARQD.

The interval 1–60 (METAKPIAPQKDSKANGVDATDPVVKVASPQDPAGDAKVEDATAPVAEVEPRTPRNRRLP) is disordered.

The protein belongs to the polyphosphate kinase 2 (PPK2) family. Class I subfamily. The cofactor is Mg(2+).

The enzyme catalyses [phosphate](n) + ATP = [phosphate](n+1) + ADP. The catalysed reaction is [phosphate](n) + CTP = [phosphate](n+1) + CDP. It carries out the reaction [phosphate](n) + GTP = [phosphate](n+1) + GDP. It catalyses the reaction [phosphate](n) + UTP = [phosphate](n+1) + UDP. Functionally, uses inorganic polyphosphate (polyP) as a donor to convert NDP to NTP. PolyP hydrolysis is slightly faster with ADP, but it can also use GDP, CDP and UDP. In Ruegeria pomeroyi (strain ATCC 700808 / DSM 15171 / DSS-3) (Silicibacter pomeroyi), this protein is NDP-polyphosphate phosphotransferase 2.